We begin with the raw amino-acid sequence, 419 residues long: Multifunctional CCA protein (419 aa).

Positions 8 and 11 each coordinate ATP. 2 residues coordinate CTP: glycine 8 and arginine 11. Residues aspartate 21 and aspartate 23 each coordinate Mg(2+). The ATP site is built by arginine 91, arginine 137, and arginine 140. Positions 91, 137, and 140 each coordinate CTP. In terms of domain architecture, HD spans 228-334; that stretch reads SFLHTMLVLQ…IKLFNKLDVW (107 aa).

Belongs to the tRNA nucleotidyltransferase/poly(A) polymerase family. Bacterial CCA-adding enzyme type 1 subfamily. Monomer. Can also form homodimers and oligomers. Mg(2+) serves as cofactor. Ni(2+) is required as a cofactor.

It carries out the reaction a tRNA precursor + 2 CTP + ATP = a tRNA with a 3' CCA end + 3 diphosphate. The catalysed reaction is a tRNA with a 3' CCA end + 2 CTP + ATP = a tRNA with a 3' CCACCA end + 3 diphosphate. Its function is as follows. Catalyzes the addition and repair of the essential 3'-terminal CCA sequence in tRNAs without using a nucleic acid template. Adds these three nucleotides in the order of C, C, and A to the tRNA nucleotide-73, using CTP and ATP as substrates and producing inorganic pyrophosphate. tRNA 3'-terminal CCA addition is required both for tRNA processing and repair. Also involved in tRNA surveillance by mediating tandem CCA addition to generate a CCACCA at the 3' terminus of unstable tRNAs. While stable tRNAs receive only 3'-terminal CCA, unstable tRNAs are marked with CCACCA and rapidly degraded. This is Multifunctional CCA protein from Mannheimia succiniciproducens (strain KCTC 0769BP / MBEL55E).